Consider the following 366-residue polypeptide: Ribosome-binding ATPase YchF (366 aa).

The OBG-type G domain occupies 3-259 (LTAGIVGLPN…LEGEEKQMFL (257 aa)). 12-17 (NVGKST) contacts ATP. Mg(2+)-binding residues include S16 and T36. A TGS domain is found at 281–364 (GLATYFTAGE…QDGDVIHFRF (84 aa)).

This sequence belongs to the TRAFAC class OBG-HflX-like GTPase superfamily. OBG GTPase family. YchF/OLA1 subfamily. Mg(2+) serves as cofactor.

ATPase that binds to both the 70S ribosome and the 50S ribosomal subunit in a nucleotide-independent manner. This chain is Ribosome-binding ATPase YchF, found in Bacillus subtilis (strain 168).